Consider the following 89-residue polypeptide: Small ribosomal subunit protein uS15 (89 aa).

The protein belongs to the universal ribosomal protein uS15 family. In terms of assembly, part of the 30S ribosomal subunit. Forms a bridge to the 50S subunit in the 70S ribosome, contacting the 23S rRNA.

One of the primary rRNA binding proteins, it binds directly to 16S rRNA where it helps nucleate assembly of the platform of the 30S subunit by binding and bridging several RNA helices of the 16S rRNA. Functionally, forms an intersubunit bridge (bridge B4) with the 23S rRNA of the 50S subunit in the ribosome. The polypeptide is Small ribosomal subunit protein uS15 (Chlamydia abortus (strain DSM 27085 / S26/3) (Chlamydophila abortus)).